Reading from the N-terminus, the 69-residue chain is MSKIKGNVKWFNESKGFGFITPEDGSKDVFVHFSAIQSNGFKTLAEGQSVEFEITEGAKGPSAANVISL.

In terms of domain architecture, CSD spans 6–66; sequence GNVKWFNESK…GAKGPSAANV (61 aa).

It is found in the cytoplasm. This is Cold shock-like protein CspE (cspE) from Buchnera aphidicola subsp. Acyrthosiphon pisum (strain APS) (Acyrthosiphon pisum symbiotic bacterium).